We begin with the raw amino-acid sequence, 282 residues long: MFDKPRLPYVVLDVICVLLAGLPFIILTSRHTPFQRGVFCTDESIKYPYREDTIPYALLGGIVIPFCIIVMITGETLSVYFNVLHSNSFVSNHYIATIYKAVGAFLFGASASQSLTDIAKYSIGRLRPHFLAVCNPDWSKINCSDGYIENFVCQGNEQKVREGRLSFYSGHSSFSMYCMLFVALYLQARMKGDWARLLRPMLQFGLVALSIYVGLSRVSDYKHHWSDVLIGLIQGAVVAILVVLYVTDFFKTTESNKERKEDSHTTLHETTNRQSYARNHEP.

The Cytoplasmic portion of the chain corresponds to 1–6; sequence MFDKPR. The short motif at 5-7 is the PDZ-binding; involved in localization to the apical cell membrane element; it reads PRL. Residues 7 to 27 form a helical membrane-spanning segment; the sequence is LPYVVLDVICVLLAGLPFIIL. The Extracellular segment spans residues 28–53; the sequence is TSRHTPFQRGVFCTDESIKYPYREDT. A helical transmembrane segment spans residues 54 to 74; that stretch reads IPYALLGGIVIPFCIIVMITG. Over 75–88 the chain is Cytoplasmic; it reads ETLSVYFNVLHSNS. The helical transmembrane segment at 89-109 threads the bilayer; sequence FVSNHYIATIYKAVGAFLFGA. The Extracellular segment spans residues 110–164; that stretch reads SASQSLTDIAKYSIGRLRPHFLAVCNPDWSKINCSDGYIENFVCQGNEQKVREGR. Residues 120-128 form a phosphatase sequence motif I region; it reads KYSIGRLRP. An N-linked (GlcNAc...) asparagine glycan is attached at asparagine 142. The helical transmembrane segment at 165–185 threads the bilayer; the sequence is LSFYSGHSSFSMYCMLFVALY. A phosphatase sequence motif II region spans residues 168–171; the sequence is YSGH. Histidine 171 acts as the Proton donors in catalysis. Topologically, residues 186-194 are cytoplasmic; sequence LQARMKGDW. A helical membrane pass occupies residues 195-215; that stretch reads ARLLRPMLQFGLVALSIYVGL. The tract at residues 216–227 is phosphatase sequence motif III; the sequence is SRVSDYKHHWSD. Topologically, residues 216 to 229 are extracellular; sequence SRVSDYKHHWSDVL. Histidine 223 functions as the Nucleophile in the catalytic mechanism. The chain crosses the membrane as a helical span at residues 230–250; it reads IGLIQGAVVAILVVLYVTDFF. At 251 to 282 the chain is on the cytoplasmic side; that stretch reads KTTESNKERKEDSHTTLHETTNRQSYARNHEP. Basic and acidic residues predominate over residues 257–271; the sequence is KERKEDSHTTLHETT. The interval 257-282 is disordered; sequence KERKEDSHTTLHETTNRQSYARNHEP. Polar residues predominate over residues 272 to 282; the sequence is NRQSYARNHEP.

It belongs to the PA-phosphatase related phosphoesterase family. As to quaternary structure, forms functional homodimers and homooligomers that are not required for substrate recognition and catalytic activity. Can also form heterooligomers with PLPP2 and PLPP3. N-glycosylated. N-linked sugars are of the complex type. N-glycosylation is not required for the phosphatase activity.

It is found in the cell membrane. Its subcellular location is the apical cell membrane. It localises to the membrane raft. The protein localises to the membrane. The protein resides in the caveola. The enzyme catalyses a 1,2-diacyl-sn-glycero-3-phosphate + H2O = a 1,2-diacyl-sn-glycerol + phosphate. It carries out the reaction 1,2-dihexadecanoyl-sn-glycero-3-phosphate + H2O = 1,2-dihexadecanoyl-sn-glycerol + phosphate. The catalysed reaction is 1,2-di-(9Z-octadecenoyl)-sn-glycero-3-phosphate + H2O = 1,2-di-(9Z-octadecenoyl)-sn-glycerol + phosphate. It catalyses the reaction a monoacyl-sn-glycero-3-phosphate + H2O = a monoacylglycerol + phosphate. The enzyme catalyses (9Z)-octadecenoyl-sn-glycero-3-phosphate + H2O = (9Z-octadecenoyl)-glycerol + phosphate. It carries out the reaction a 1-acyl-sn-glycero-3-phosphate + H2O = a 1-acyl-sn-glycerol + phosphate. The catalysed reaction is 1-(9Z-octadecenoyl)-sn-glycero-3-phosphate + H2O = 1-(9Z-octadecenoyl)-sn-glycerol + phosphate. It catalyses the reaction a 1,2-diacyl-sn-glycerol 3-diphosphate + H2O = a 1,2-diacyl-sn-glycero-3-phosphate + phosphate + H(+). The enzyme catalyses sphing-4-enine 1-phosphate + H2O = sphing-4-enine + phosphate. It carries out the reaction an N-acylsphing-4-enine 1-phosphate + H2O = an N-acylsphing-4-enine + phosphate. The catalysed reaction is N-(octanoyl)-sphing-4-enine-1-phosphate + H2O = N-octanoylsphing-4-enine + phosphate. It catalyses the reaction N-(9Z-octadecenoyl)-ethanolamine phosphate + H2O = N-(9Z-octadecenoyl) ethanolamine + phosphate. The enzyme catalyses 1-hexadecanoyl-2-(9Z-octadecenoyl)-sn-glycero-3-phosphate + H2O = 1-hexadecanoyl-2-(9Z-octadecenoyl)-sn-glycerol + phosphate. Its pathway is lipid metabolism; phospholipid metabolism. Magnesium-independent phospholipid phosphatase. Insensitive to N-ethylmaleimide. Functionally, magnesium-independent phospholipid phosphatase of the plasma membrane that catalyzes the dephosphorylation of a variety of glycerolipid and sphingolipid phosphate esters including phosphatidate/PA, lysophosphatidate/LPA, diacylglycerol pyrophosphate/DGPP, sphingosine 1-phosphate/S1P and ceramide 1-phosphate/C1P. Also acts on N-oleoyl ethanolamine phosphate/N-(9Z-octadecenoyl)-ethanolamine phosphate, a potential physiological compound. Through its extracellular phosphatase activity allows both the hydrolysis and the cellular uptake of these bioactive lipid mediators from the milieu, regulating signal transduction in different cellular processes. It is for instance essential for the extracellular hydrolysis of S1P and subsequent conversion into intracellular S1P. Involved in the regulation of inflammation, platelets activation, cell proliferation and migration among other processes. May also have an intracellular activity to regulate phospholipid-mediated signaling pathways. In Rattus norvegicus (Rat), this protein is Phospholipid phosphatase 1.